The following is a 173-amino-acid chain: Bifunctional protein PyrR (173 aa).

Substrate contacts are provided by residues 40 to 41 (TR), 97 to 105 (DDVLYTGRT), and Arg130. The PRPP-binding motif lies at 93 to 105 (VILIDDVLYTGRT).

It belongs to the purine/pyrimidine phosphoribosyltransferase family. PyrR subfamily. Homodimer and homohexamer; in equilibrium.

The catalysed reaction is UMP + diphosphate = 5-phospho-alpha-D-ribose 1-diphosphate + uracil. In terms of biological role, regulates transcriptional attenuation of the pyrimidine nucleotide (pyr) operon by binding in a uridine-dependent manner to specific sites on pyr mRNA. This disrupts an antiterminator hairpin in the RNA and favors formation of a downstream transcription terminator, leading to a reduced expression of downstream genes. Its function is as follows. Also displays a weak uracil phosphoribosyltransferase activity which is not physiologically significant. This chain is Bifunctional protein PyrR, found in Streptococcus pyogenes serotype M6 (strain ATCC BAA-946 / MGAS10394).